The following is a 257-amino-acid chain: MNRIETAFKNTKPFIGYLTGGDGGFDYSVACAHALLRGGVDILEIGFPFSDPVADGPIIQKAHTRALKEKTDSTTILEIAKALRQTSDIPLVLFSYYNPLLQKGPQYLHQLKAAGFDAVLTVDLPIPRNANESESFFQALMEAKLFPILLVTPSTQEERLLQISKLAKGFLYYVSHKGTTGIRSKLSDDFSTQIARLRRYFQIPIVAGFGIANRASAIAALEHADGFVVGSAFVEKLEKKISPEELTTFAQSIDPRQ.

Catalysis depends on proton acceptor residues Glu44 and Asp55.

This sequence belongs to the TrpA family. In terms of assembly, tetramer of two alpha and two beta chains.

It catalyses the reaction (1S,2R)-1-C-(indol-3-yl)glycerol 3-phosphate + L-serine = D-glyceraldehyde 3-phosphate + L-tryptophan + H2O. It participates in amino-acid biosynthesis; L-tryptophan biosynthesis; L-tryptophan from chorismate: step 5/5. In terms of biological role, the alpha subunit is responsible for the aldol cleavage of indoleglycerol phosphate to indole and glyceraldehyde 3-phosphate. The protein is Tryptophan synthase alpha chain of Chlamydia felis (strain Fe/C-56) (Chlamydophila felis).